Consider the following 422-residue polypeptide: Ubiquitin-conjugating enzyme E2 Q1 (422 aa).

Met1 carries the post-translational modification N-acetylmethionine. The segment covering 1–24 (MQQPQPQGQQQPGPGQQLGVQGAA) has biased composition (low complexity). Disordered regions lie at residues 1–40 (MQQPQPQGQQQPGPGQQLGVQGAAPGAGGGPGGGPGPGPC) and 173–221 (QPLP…EDDG). Residues 25-35 (PGAGGGPGGGP) are compositionally biased toward gly residues. A compositionally biased stretch (acidic residues) spans 185 to 200 (VSSEDEDEEMPEDTED). Basic and acidic residues predominate over residues 212–221 (AEGKKSEDDG). The UBC core domain occupies 251 to 415 (QATDRLMKEL…VQIHEKNGWY (165 aa)). The active-site Glycyl thioester intermediate is Cys351.

The protein belongs to the ubiquitin-conjugating enzyme family. In terms of assembly, monomer and homodimer. Only the homodimer is linked to ubiquitin through thiolester activation. Interacts (via N-terminus) with B4GALT1 (via N-terminal cytoplasmic domain); the interaction is direct. In terms of processing, autoubiquitinated in vitro in the presence of NEDD4L. As to expression, expressed in liver, brain, heart, spleen, lung, kidney, muscle, ovary, epididymis, testis and placenta. Also expressed in thymus and ES cells. Only expressed in the uterus during pregnancy. Expressed in oocytes and during subsequent embryonic development stages (4-cell stage, blastocyst, 8.5 dpc, 13.5 dpc, 16.5 dpc and 18.5 dpc).

The protein localises to the nucleus. Its subcellular location is the cell projection. The protein resides in the filopodium. It is found in the cytoplasm. It localises to the cytosol. The catalysed reaction is S-ubiquitinyl-[E1 ubiquitin-activating enzyme]-L-cysteine + [E2 ubiquitin-conjugating enzyme]-L-cysteine = [E1 ubiquitin-activating enzyme]-L-cysteine + S-ubiquitinyl-[E2 ubiquitin-conjugating enzyme]-L-cysteine.. It functions in the pathway protein modification; protein ubiquitination. Functionally, catalyzes the covalent attachment of ubiquitin to other proteins. Involved in female fertility and embryo implantation. May be involved in hormonal homeostasis in females. Involved in regulation of B4GALT1 cell surface expression, B4GALT1-mediated cell adhesion to laminin and embryoid body formation. The protein is Ubiquitin-conjugating enzyme E2 Q1 (Ube2q1) of Mus musculus (Mouse).